Consider the following 423-residue polypeptide: MDRASENRRLAAVGKPVPGIGEMGNRRPLRDINNLVGAPPHPSAIAKKPMLEKSGKEEQKPALVVSHRPMTRNFAASLTRKEQLDHQVSVADAAVVCTDPQKNPIPDGTVDDDVESCESNDYIAVDECNDTDEDESMMDIDSADSGNPLAATEYVEELYKFYRENEEMSCVQPDYMSSQGDINEKMRAILIDWLIEVHHKFELMDETLFLTVNIVDRFLEKQVVPRKKLQLVGVTAMLLACKYEEVAVPVVEDLVLISDRAYTKGQILEMEKLILNTLQFNMSVPTPYVFMRRFLKAAQSDKQLQLLSFFILELSLVEYQMLKYRPSLLAAAAVYTAQCALTRCQQWTKTCELHSRYTGEQLLECSRMMVDFHQKAGAGKLTGVHRKYSTFKFGCAAKTEPALFLLESGAGGYNLQKHLQQAC.

The interval 1-61 (MDRASENRRL…EKSGKEEQKP (61 aa)) is disordered. The span at 49–60 (PMLEKSGKEEQK) shows a compositional bias: basic and acidic residues.

It belongs to the cyclin family. Cyclin AB subfamily. As to quaternary structure, interacts with CDKB2-1. In terms of tissue distribution, expressed in the intercalary meristem and the elongation zone of internodes. Expressed in adventitious roots at all nodes under submergence conditions.

Involved in the control of the cell cycle at the G2/M (mitosis) transition. May activate CDKB2-1 kinase. The sequence is that of Cyclin-B2-1 (CYCB2-1) from Oryza sativa subsp. indica (Rice).